A 150-amino-acid polypeptide reads, in one-letter code: Mating pheromone 1 (150 aa).

An N-terminal signal peptide occupies residues 1-16 (MKAIFIILAILMVTQA). Residues 17-52 (FKMTSKVNTKLQSQIQSKFQSKNKLASTFQTSSKLK) constitute a propeptide that is removed on maturation.

Its subcellular location is the secreted. In terms of biological role, mating ciliate pheromones (or gamones) are diffusible extracellular communication signals that distinguish different intraspecific classes of cells commonly referred to as 'mating types'. They prepare the latter for conjugation by changing their cell surface properties. In Euplotoides octocarinatus (Freshwater ciliate), this protein is Mating pheromone 1.